The chain runs to 211 residues: Dof zinc finger protein 5 (211 aa).

Positions 37 to 101 (FVVAREKVEP…QRRLQDSAEA (65 aa)) are disordered. Basic and acidic residues predominate over residues 68 to 80 (IKREAADRDEEQR). The Dof-type zinc-finger motif lies at 109 to 163 (LPCPRCRSRDTKFCYFNNYNVNQPRHFCKACHRYWTAGGALRNVPVGAGRRKNRP). The Zn(2+) site is built by C111, C114, C136, and C139. The disordered stretch occupies residues 191–211 (SPTSPSPVYTDRWPVTPDRPF).

The protein localises to the nucleus. In terms of biological role, transcription factor that may transactivate seed storage protein genes in developing seeds. In Oryza sativa subsp. japonica (Rice), this protein is Dof zinc finger protein 5.